The following is a 222-amino-acid chain: MAASETIEIRRETAQVPYREALDAMASRNAAIAEGTAPELIWLLEHPPVYTAGTSASPDELLDPRFEVVEAGRGGRYTYHGPGQRVGYVLLDLRKRARDVRGFVHALEGWVIETLADFGVESWRAEGRVGIWTRGADGREAKIGAIGVRIRRWVTMHGFSVNLSPDLAHFGGIVPCGIEEFGVTSLAALGREVTPDQWDEALLSHLDGFLARLDTPCPPEAA.

A BPL/LPL catalytic domain is found at 35–214 (GTAPELIWLL…HLDGFLARLD (180 aa)). Residues 73 to 80 (RGGRYTYH), 145 to 147 (AIG), and 158 to 160 (GFS) contribute to the substrate site. The active-site Acyl-thioester intermediate is the cysteine 176.

The protein belongs to the LipB family.

Its subcellular location is the cytoplasm. It carries out the reaction octanoyl-[ACP] + L-lysyl-[protein] = N(6)-octanoyl-L-lysyl-[protein] + holo-[ACP] + H(+). It participates in protein modification; protein lipoylation via endogenous pathway; protein N(6)-(lipoyl)lysine from octanoyl-[acyl-carrier-protein]: step 1/2. Its function is as follows. Catalyzes the transfer of endogenously produced octanoic acid from octanoyl-acyl-carrier-protein onto the lipoyl domains of lipoate-dependent enzymes. Lipoyl-ACP can also act as a substrate although octanoyl-ACP is likely to be the physiological substrate. This chain is Octanoyltransferase, found in Novosphingobium aromaticivorans (strain ATCC 700278 / DSM 12444 / CCUG 56034 / CIP 105152 / NBRC 16084 / F199).